The following is a 56-amino-acid chain: MSKGTPSMGKCHKRTHVRCRRCGRLSYNFNRKTCVACGFGRSKRLRSYKWMRKAGY.

Zn(2+) is bound by residues Cys19, Cys22, Cys34, and Cys37. The C4-type zinc-finger motif lies at 19-37 (CRRCGRLSYNFNRKTCVAC).

It belongs to the eukaryotic ribosomal protein eL37 family. The cofactor is Zn(2+).

Functionally, binds to the 23S rRNA. This chain is Large ribosomal subunit protein eL37, found in Methanothrix thermoacetophila (strain DSM 6194 / JCM 14653 / NBRC 101360 / PT) (Methanosaeta thermophila).